The primary structure comprises 388 residues: Chaperone protein DnaJ (388 aa).

The J domain maps to 5-69 (DYYDVLGVDK…QKRAQYDQFG (65 aa)). The CR-type zinc finger occupies 145 to 227 (GKKTDITYTR…CHGQGTVDKK (83 aa)). The Zn(2+) site is built by Cys158, Cys161, Cys175, Cys178, Cys201, Cys204, Cys215, and Cys218. 4 CXXCXGXG motif repeats span residues 158–165 (CPTCDGSG), 175–182 (CDKCHGSG), 201–208 (CDKCGGRG), and 215–222 (CQTCHGQG).

The protein belongs to the DnaJ family. As to quaternary structure, homodimer. Zn(2+) is required as a cofactor.

It is found in the cytoplasm. Its function is as follows. Participates actively in the response to hyperosmotic and heat shock by preventing the aggregation of stress-denatured proteins and by disaggregating proteins, also in an autonomous, DnaK-independent fashion. Unfolded proteins bind initially to DnaJ; upon interaction with the DnaJ-bound protein, DnaK hydrolyzes its bound ATP, resulting in the formation of a stable complex. GrpE releases ADP from DnaK; ATP binding to DnaK triggers the release of the substrate protein, thus completing the reaction cycle. Several rounds of ATP-dependent interactions between DnaJ, DnaK and GrpE are required for fully efficient folding. Also involved, together with DnaK and GrpE, in the DNA replication of plasmids through activation of initiation proteins. In Lactobacillus johnsonii (strain CNCM I-12250 / La1 / NCC 533), this protein is Chaperone protein DnaJ.